Consider the following 99-residue polypeptide: Nucleoid-associated protein LL0120 (99 aa).

This sequence belongs to the YbaB/EbfC family. Homodimer.

The protein resides in the cytoplasm. The protein localises to the nucleoid. In terms of biological role, binds to DNA and alters its conformation. May be involved in regulation of gene expression, nucleoid organization and DNA protection. The polypeptide is Nucleoid-associated protein LL0120 (ybcG) (Lactococcus lactis subsp. lactis (strain IL1403) (Streptococcus lactis)).